The chain runs to 101 residues: Urease subunit beta (101 aa).

This sequence belongs to the urease beta subunit family. Heterotrimer of UreA (gamma), UreB (beta) and UreC (alpha) subunits. Three heterotrimers associate to form the active enzyme.

Its subcellular location is the cytoplasm. The enzyme catalyses urea + 2 H2O + H(+) = hydrogencarbonate + 2 NH4(+). The protein operates within nitrogen metabolism; urea degradation; CO(2) and NH(3) from urea (urease route): step 1/1. In Burkholderia pseudomallei (strain 668), this protein is Urease subunit beta.